The chain runs to 276 residues: MRGAYYVITALLVVASSQTSADSGHRLHVYDHDVVAAENAAAKTLPQQSLRGSRDVPDDLAHEERAIISELVEEGAKLIPRAAENVEEMPRVTEAVGKRPRVAEKDALEKASGADEASKKPRNTATDDAFQGMSTEWELELPFKEWNTEIEPMREMPEPKWSWEKRKLVHEAFVKLCAEDLNPTVYETARLWSLFDGKAKSRPATFHRQVLIQLAKENVRRDVLIMKSVESEWDRWNEVSILSRVDVLNMLLNVHFQRWKRMYNAFGEQRSKLIAL.

The N-terminal stretch at Met-1–Ala-21 is a signal peptide. The short motif at Gln-48–Arg-65 is the RxLR-dEER element. The segment at Gly-97–Phe-130 is disordered. The span at Arg-101–Lys-119 shows a compositional bias: basic and acidic residues.

This sequence belongs to the RxLR effector family.

The protein localises to the secreted. Its subcellular location is the host nucleus. Its function is as follows. Secreted effector that completely suppresses the host cell death induced by cell death-inducing proteins. In Plasmopara viticola (Downy mildew of grapevine), this protein is Secreted RxLR effector protein 120.